The following is a 203-amino-acid chain: MFLLSRFSDIISIHPSNFWKPTKEALAEEIHKKYANKVIQNIGLAICVYDFLKIGEGIIKYGDGSSYMNVVFRLIIFRPFRGEVMLGKIKSCSEEGIRVTISFFDDIFIPKDMLFDPCVFRPDERAWVWKIEGEDGSEGTELYFDIDEEIRFQIESEDFVDISPKRNKNATAITGTEALESVSPYTLIASCSRDGLGIPAWWK.

Belongs to the eukaryotic RPB7/RPC8 RNA polymerase subunit family. In terms of assembly, component of the RNA polymerase III (Pol III) complex consisting of 17 subunits. Rpc25/rpc8 and rpc17/rpc9 form a Pol III subcomplex.

It localises to the cytoplasm. The protein localises to the nucleus. Functionally, DNA-dependent RNA polymerase catalyzes the transcription of DNA into RNA using the four ribonucleoside triphosphates as substrates. Specific peripheric component of RNA polymerase III which synthesizes small RNAs, such as 5S rRNA and tRNA. In Schizosaccharomyces pombe (strain 972 / ATCC 24843) (Fission yeast), this protein is DNA-directed RNA polymerase III subunit rpc8 (rpc25).